The sequence spans 739 residues: Phosphoribosylformylglycinamidine synthase subunit PurL (739 aa).

His53 is an active-site residue. Residues Tyr56 and Lys95 each contribute to the ATP site. Glu97 contributes to the Mg(2+) binding site. Substrate-binding positions include 98–101 and Arg120; that span reads SHNH. The Proton acceptor role is filled by His99. Mg(2+) is bound at residue Asp121. Gln244 provides a ligand contact to substrate. Asp274 lines the Mg(2+) pocket. Residue 318–320 participates in substrate binding; it reads ESQ. Positions 501 and 538 each coordinate ATP. Mg(2+) is bound at residue Asn539. Position 541 (Ser541) interacts with substrate.

It belongs to the FGAMS family. In terms of assembly, monomer. Part of the FGAM synthase complex composed of 1 PurL, 1 PurQ and 2 PurS subunits.

It localises to the cytoplasm. The catalysed reaction is N(2)-formyl-N(1)-(5-phospho-beta-D-ribosyl)glycinamide + L-glutamine + ATP + H2O = 2-formamido-N(1)-(5-O-phospho-beta-D-ribosyl)acetamidine + L-glutamate + ADP + phosphate + H(+). It participates in purine metabolism; IMP biosynthesis via de novo pathway; 5-amino-1-(5-phospho-D-ribosyl)imidazole from N(2)-formyl-N(1)-(5-phospho-D-ribosyl)glycinamide: step 1/2. Functionally, part of the phosphoribosylformylglycinamidine synthase complex involved in the purines biosynthetic pathway. Catalyzes the ATP-dependent conversion of formylglycinamide ribonucleotide (FGAR) and glutamine to yield formylglycinamidine ribonucleotide (FGAM) and glutamate. The FGAM synthase complex is composed of three subunits. PurQ produces an ammonia molecule by converting glutamine to glutamate. PurL transfers the ammonia molecule to FGAR to form FGAM in an ATP-dependent manner. PurS interacts with PurQ and PurL and is thought to assist in the transfer of the ammonia molecule from PurQ to PurL. The chain is Phosphoribosylformylglycinamidine synthase subunit PurL from Listeria monocytogenes serovar 1/2a (strain ATCC BAA-679 / EGD-e).